Here is a 233-residue protein sequence, read N- to C-terminus: MPSTDSIPKSNFDAIPDVIQAFKNGEFVVVLDDPSRENEADLIIAAESVTTEQMAFMVRHSSGLICAPLTPERTTALDLPQMVTHNADPRGTAYTVSVDAEHPSTTTGISAHDRALACRMLAAPDAQPSHFRRPGHVFPLRAVAGGVRARRGHTEAGVELCRLAGKRPVAVISEIVDDGQEVEGRAVRAAPGMLRGDECVAFARRWGLKVCTIEDMIAHVEKTEGKLETNGSG.

Glu37 provides a ligand contact to Mg(2+). Mn(2+) is bound at residue Glu37. Asp41 is a D-ribulose 5-phosphate binding site. An S-glutathionyl cysteine modification is found at Cys66. Residues Thr92 and 150–154 contribute to the D-ribulose 5-phosphate site; that span reads RRGHT. His153 provides a ligand contact to Mg(2+). Residue His153 participates in Mn(2+) binding.

As to quaternary structure, homodimer. Mg(2+) serves as cofactor. It depends on Mn(2+) as a cofactor. S-glutathionylation is reversible and dependent on a glutaredoxin.

It catalyses the reaction D-ribulose 5-phosphate = (2S)-2-hydroxy-3-oxobutyl phosphate + formate + H(+). The protein operates within cofactor biosynthesis; riboflavin biosynthesis; 2-hydroxy-3-oxobutyl phosphate from D-ribulose 5-phosphate: step 1/1. Its function is as follows. Catalyzes the conversion of D-ribulose 5-phosphate to formate and 3,4-dihydroxy-2-butanone 4-phosphate. In Pyricularia oryzae (strain 70-15 / ATCC MYA-4617 / FGSC 8958) (Rice blast fungus), this protein is 3,4-dihydroxy-2-butanone 4-phosphate synthase (RIB3).